A 179-amino-acid polypeptide reads, in one-letter code: Apoptosis regulator Bcl-2 homolog (179 aa).

A BH1 motif is present at residues 76–95 (ELFKDLINWGRICGFIVFSA). The BH2 motif lies at 126-141 (PWMISHGGQEEFLAFS).

This sequence belongs to the Bcl-2 family. In terms of assembly, interacts with host BECN1 (via BH3 homology domain); this interaction allows the virus to inhibit BECN1, and thus autophagy. Interacts with host BID. Interacts with host BAX.

Its subcellular location is the host mitochondrion. It localises to the host endoplasmic reticulum. In terms of biological role, suppresses apoptosis in host cell to promote the viral replication. Has the ability to potentially bind to all the members of the proapoptotic Bcl-2 family. Inhibits autophagy by interacting with host Beclin 1 (BECN1). In African swine fever virus (isolate Tick/South Africa/Pretoriuskop Pr4/1996) (ASFV), this protein is Apoptosis regulator Bcl-2 homolog.